Here is a 150-residue protein sequence, read N- to C-terminus: Transcriptional repressor NrdR (150 aa).

The segment at 3-34 (CPYCQFEDTRVIDSRLASEGEQVRRRRECNRC) is a zinc-finger region. An ATP-cone domain is found at 49-139 (PRIVKRDGTR…VYRSFEDVSA (91 aa)).

Belongs to the NrdR family. Zn(2+) is required as a cofactor.

In terms of biological role, negatively regulates transcription of bacterial ribonucleotide reductase nrd genes and operons by binding to NrdR-boxes. The sequence is that of Transcriptional repressor NrdR from Alkalilimnicola ehrlichii (strain ATCC BAA-1101 / DSM 17681 / MLHE-1).